A 469-amino-acid chain; its full sequence is MNPNQKIITIGSVSLTIATICFLMQIAILVTTVTLHFKQYECDSPANKQVMPCEPIIIERNITEIVYLTNTTIEKEICPKLVEYRNWSKPQCKITGFAPFSKDNSIRLSAGGDIWVTREPYVSCDPGKCYQFALGQGTTLDNKHSNDTIHDRTPHRTLLMNELGVPFHLGTRQVCIAWSSSSCHDGKAWLHVCVTGYDKNATASFIYDGRLVDSIGSWSQNILRTQESECVCINGTCTVVMTDGSASGRADTKILFIEEGKIVHISPLSGSAQHVEECSCYPRYPGVRCICRDNWKGSNRPVVDINVKDYSIDSSYVCSGLVGDTPRNNDRSSSSYCRNPNNEKGTHGVKGWAFDDGNDVWMGRTISEDSRSGYETFKVIGGWSTPNSKLQINRQVIVDSDNRSGYSGIFSVEGKSCINRCFYVELIRGREQETRVWWTSNSIVVFCGTSGTYGTGSWPDGADINLMPI.

Residues 1-9 (MNPNQKIIT) lie on the Intravirion side of the membrane. A helical membrane pass occupies residues 10 to 30 (IGSVSLTIATICFLMQIAILV). An involved in apical transport and lipid raft association region spans residues 11-33 (GSVSLTIATICFLMQIAILVTTV). Residues 31–469 (TTVTLHFKQY…DGADINLMPI (439 aa)) are Virion surface-facing. Residues 36-88 (HFKQYECDSPANKQVMPCEPIIIERNITEIVYLTNTTIEKEICPKLVEYRNWS) form a hypervariable stalk region region. N-linked (GlcNAc...) asparagine; by host glycans are attached at residues N61, N70, and N86. The segment at 91 to 469 (QCKITGFAPF…DGADINLMPI (379 aa)) is head of neuraminidase. Disulfide bonds link C92/C417, C124/C129, C183/C230, C232/C237, C278/C291, C280/C289, C318/C337, and C421/C447. Position 118 (R118) interacts with substrate. The N-linked (GlcNAc...) asparagine; by host glycan is linked to N146. Residue D151 is the Proton donor/acceptor of the active site. A substrate-binding site is contributed by R152. Residues N200 and N234 are each glycosylated (N-linked (GlcNAc...) asparagine; by host). Position 276-277 (276-277 (EE)) interacts with substrate. Residue R292 coordinates substrate. The Ca(2+) site is built by D293, G297, and D324. R371 is a substrate binding site. N402 carries N-linked (GlcNAc...) asparagine; by host glycosylation. The Nucleophile role is filled by Y406.

The protein belongs to the glycosyl hydrolase 34 family. As to quaternary structure, homotetramer. It depends on Ca(2+) as a cofactor. In terms of processing, N-glycosylated.

Its subcellular location is the virion membrane. It is found in the host apical cell membrane. It carries out the reaction Hydrolysis of alpha-(2-&gt;3)-, alpha-(2-&gt;6)-, alpha-(2-&gt;8)- glycosidic linkages of terminal sialic acid residues in oligosaccharides, glycoproteins, glycolipids, colominic acid and synthetic substrates.. With respect to regulation, inhibited by the neuraminidase inhibitors zanamivir (Relenza) and oseltamivir (Tamiflu). These drugs interfere with the release of progeny virus from infected cells and are effective against all influenza strains. Resistance to neuraminidase inhibitors is quite rare. In terms of biological role, catalyzes the removal of terminal sialic acid residues from viral and cellular glycoconjugates. Cleaves off the terminal sialic acids on the glycosylated HA during virus budding to facilitate virus release. Additionally helps virus spread through the circulation by further removing sialic acids from the cell surface. These cleavages prevent self-aggregation and ensure the efficient spread of the progeny virus from cell to cell. Otherwise, infection would be limited to one round of replication. Described as a receptor-destroying enzyme because it cleaves a terminal sialic acid from the cellular receptors. May facilitate viral invasion of the upper airways by cleaving the sialic acid moieties on the mucin of the airway epithelial cells. Likely to plays a role in the budding process through its association with lipid rafts during intracellular transport. May additionally display a raft-association independent effect on budding. Plays a role in the determination of host range restriction on replication and virulence. Sialidase activity in late endosome/lysosome traffic seems to enhance virus replication. The chain is Neuraminidase from Influenza A virus (strain A/Beijing/39/1975 H3N2).